Consider the following 202-residue polypeptide: Small ribosomal subunit protein uS4 (202 aa).

An S4 RNA-binding domain is found at 91 to 168; the sequence is SMLSSVLYNS…QKVPDYLEVD (78 aa).

It belongs to the universal ribosomal protein uS4 family. As to quaternary structure, part of the 30S ribosomal subunit. Contacts protein S5. The interaction surface between S4 and S5 is involved in control of translational fidelity.

Functionally, one of the primary rRNA binding proteins, it binds directly to 16S rRNA where it nucleates assembly of the body of the 30S subunit. With S5 and S12 plays an important role in translational accuracy. The protein is Small ribosomal subunit protein uS4 of Ehrlichia ruminantium (strain Welgevonden).